The chain runs to 192 residues: Beta-glucosidase (192 aa).

This sequence belongs to the glycosyl hydrolase 3 family.

It catalyses the reaction Hydrolysis of terminal, non-reducing beta-D-glucosyl residues with release of beta-D-glucose.. Its pathway is glycan metabolism; cellulose degradation. The sequence is that of Beta-glucosidase from Schizophyllum commune (Split gill fungus).